The following is a 259-amino-acid chain: Probable 6-phosphogluconolactonase 2 (259 aa).

It belongs to the glucosamine/galactosamine-6-phosphate isomerase family. 6-phosphogluconolactonase subfamily.

Its subcellular location is the cytoplasm. The protein resides in the cytosol. It catalyses the reaction 6-phospho-D-glucono-1,5-lactone + H2O = 6-phospho-D-gluconate + H(+). It functions in the pathway carbohydrate degradation; pentose phosphate pathway; D-ribulose 5-phosphate from D-glucose 6-phosphate (oxidative stage): step 2/3. Its function is as follows. Catalyzes the hydrolysis of 6-phosphogluconolactone to 6-phosphogluconate. This is Probable 6-phosphogluconolactonase 2 from Arabidopsis thaliana (Mouse-ear cress).